A 151-amino-acid polypeptide reads, in one-letter code: Ribonuclease H (151 aa).

Residues 1–143 (MYKKIEIFTD…CDQLARLAAK (143 aa)) enclose the RNase H type-1 domain. Residues Asp10, Glu48, Asp70, and Asp135 each contribute to the Mg(2+) site.

Belongs to the RNase H family. As to quaternary structure, monomer. Mg(2+) serves as cofactor.

It localises to the cytoplasm. The enzyme catalyses Endonucleolytic cleavage to 5'-phosphomonoester.. Endonuclease that specifically degrades the RNA of RNA-DNA hybrids. The polypeptide is Ribonuclease H (Blochmanniella pennsylvanica (strain BPEN)).